Reading from the N-terminus, the 398-residue chain is ATP-dependent RNA helicase eIF4A (398 aa).

The Q motif motif lies at 25–53 (DSFDTMNLKPELLRGVYAYGFERPSAIQQ). The 171-residue stretch at 56-226 (IMPVIKGHDV…TKFMRDPVRI (171 aa)) folds into the Helicase ATP-binding domain. Position 69–76 (69–76 (AQSGTGKT)) interacts with ATP. Residues 174–177 (DEAD) carry the DEAD box motif. The Helicase C-terminal domain maps to 237–398 (GIKQFYIAVE…EMPMNVADLI (162 aa)).

The protein belongs to the DEAD box helicase family. eIF4A subfamily. In terms of assembly, component of the eIF4F complex, which composition varies with external and internal environmental conditions. It is composed of at least eIF4A, eIF4E and eIF4G.

It localises to the cytoplasm. It catalyses the reaction ATP + H2O = ADP + phosphate + H(+). ATP-dependent RNA helicase which is a subunit of the eIF4F complex involved in cap recognition and is required for mRNA binding to ribosome. In the current model of translation initiation, eIF4A unwinds RNA secondary structures in the 5'-UTR of mRNAs which is necessary to allow efficient binding of the small ribosomal subunit, and subsequent scanning for the initiator codon. This Botryotinia fuckeliana (strain B05.10) (Noble rot fungus) protein is ATP-dependent RNA helicase eIF4A (tif1).